Here is a 381-residue protein sequence, read N- to C-terminus: Queuine tRNA-ribosyltransferase (381 aa).

Aspartate 96 acts as the Proton acceptor in catalysis. Residues 96 to 100 (DSGGF), aspartate 150, glutamine 193, and glycine 220 each bind substrate. The segment at 251-257 (GVGAPDS) is RNA binding. Aspartate 270 serves as the catalytic Nucleophile. The RNA binding; important for wobble base 34 recognition stretch occupies residues 275 to 279 (TRIAR). Zn(2+)-binding residues include cysteine 308, cysteine 310, cysteine 313, and histidine 339.

Belongs to the queuine tRNA-ribosyltransferase family. In terms of assembly, homodimer. Within each dimer, one monomer is responsible for RNA recognition and catalysis, while the other monomer binds to the replacement base PreQ1. Requires Zn(2+) as cofactor.

The catalysed reaction is 7-aminomethyl-7-carbaguanine + guanosine(34) in tRNA = 7-aminomethyl-7-carbaguanosine(34) in tRNA + guanine. Its pathway is tRNA modification; tRNA-queuosine biosynthesis. Its function is as follows. Catalyzes the base-exchange of a guanine (G) residue with the queuine precursor 7-aminomethyl-7-deazaguanine (PreQ1) at position 34 (anticodon wobble position) in tRNAs with GU(N) anticodons (tRNA-Asp, -Asn, -His and -Tyr). Catalysis occurs through a double-displacement mechanism. The nucleophile active site attacks the C1' of nucleotide 34 to detach the guanine base from the RNA, forming a covalent enzyme-RNA intermediate. The proton acceptor active site deprotonates the incoming PreQ1, allowing a nucleophilic attack on the C1' of the ribose to form the product. After dissociation, two additional enzymatic reactions on the tRNA convert PreQ1 to queuine (Q), resulting in the hypermodified nucleoside queuosine (7-(((4,5-cis-dihydroxy-2-cyclopenten-1-yl)amino)methyl)-7-deazaguanosine). This is Queuine tRNA-ribosyltransferase from Enterococcus faecalis (strain ATCC 700802 / V583).